Reading from the N-terminus, the 108-residue chain is MLKSNLEVDNRFSLIGKVADFPKRNKSPSGIDHCLFYLEHRSNKKEAGFTRQAWCKIAIQISGNQLIEKTQSITVGQQLLVVGFVTSHRSSNGLNQLVLHAEQIEFIE.

The SSB domain occupies 8–108; it reads VDNRFSLIGK…LHAEQIEFIE (101 aa).

Belongs to the PriB family. As to quaternary structure, homodimer. Interacts with PriA and DnaT. Component of the replication restart primosome. Primosome assembly occurs via a 'hand-off' mechanism. PriA binds to replication forks, subsequently PriB then DnaT bind; DnaT then displaces ssDNA to generate the helicase loading substrate.

Functionally, involved in the restart of stalled replication forks, which reloads the replicative helicase on sites other than the origin of replication; the PriA-PriB pathway is the major replication restart pathway. During primosome assembly it facilitates complex formation between PriA and DnaT on DNA; stabilizes PriA on DNA. Stimulates the DNA unwinding activity of PriA helicase. In Histophilus somni (strain 129Pt) (Haemophilus somnus), this protein is Replication restart protein PriB.